The sequence spans 88 residues: Small ribosomal subunit protein uS17 (88 aa).

This sequence belongs to the universal ribosomal protein uS17 family. As to quaternary structure, part of the 30S ribosomal subunit.

Functionally, one of the primary rRNA binding proteins, it binds specifically to the 5'-end of 16S ribosomal RNA. The protein is Small ribosomal subunit protein uS17 of Lactobacillus helveticus (strain DPC 4571).